Reading from the N-terminus, the 307-residue chain is Low-salt glycan biosynthesis hexosyltransferase Agl10 (307 aa).

This sequence belongs to the glycosyltransferase 2 family.

It participates in protein modification; protein glycosylation. It functions in the pathway cell surface structure biogenesis; S-layer biogenesis. In terms of biological role, hexosyltransferase involved in N-glycan biosynthetic pathway that takes place under low-salt conditions (1.75 M instead of 3.4 M). Participates in the formation of the tetrasaccharide present at 'Asn-532' of S-layer glycoprotein Csg, consisting of a sulfated hexose, 2 hexoses and rhamnose. Involved in the addition of final rhamnose (sugar 4) of the tetrasaccharide on the dolichol phosphate carrier. In Haloferax volcanii (strain ATCC 29605 / DSM 3757 / JCM 8879 / NBRC 14742 / NCIMB 2012 / VKM B-1768 / DS2) (Halobacterium volcanii), this protein is Low-salt glycan biosynthesis hexosyltransferase Agl10 (agl10).